A 792-amino-acid polypeptide reads, in one-letter code: Ribosome biogenesis protein BOP1 homolog (792 aa).

Positions 1-11 (MTKKRTVKRKV) are enriched in basic residues. The interval 1-167 (MTKKRTVKRK…ESDTSDEEDI (167 aa)) is disordered. Acidic residues-rich tracts occupy residues 44–53 (EDTTDDEGID), 60–72 (SSEDLEFESDEEG), 82–117 (EAEEGEDDQDEDDDEDEDEGEDEDDDSDDDSEESDA), and 157–166 (EESDTSDEED). 7 WD repeats span residues 453–494 (GHTD…RTIE), 496–534 (NDVVRCVAWCPNAKLSIIAVATGSRLLLINPKVGDKLLI), 578–620 (THFK…SQIP), 623–661 (KSKGLIQCVLFHPVKPCFFVATQHNIRIYDLVKQELIKK), 664–703 (TNSKWISGMSIHPKGDNLLVSTYDKKMLWFDLDLSTKPYQ), 707–746 (LHRNAVRSVAFHLRYPLFASGSDDQAVIVSHGMVYNDLLQ), and 762–792 (RDEFGVLDVTWHPVQPWVFSTGADCTIRLYT).

It belongs to the WD repeat BOP1/ERB1 family.

The protein resides in the nucleus. The protein localises to the nucleolus. Its subcellular location is the nucleoplasm. Required for maturation of ribosomal RNAs and formation of the large ribosomal subunit. This Drosophila mojavensis (Fruit fly) protein is Ribosome biogenesis protein BOP1 homolog.